The sequence spans 85 residues: Senescence-associated and QQS-related protein (85 aa).

A compositionally biased stretch (basic and acidic residues) spans 1-24 (MSFRKVEKKPTEMGRNMTHEKSDS). 2 disordered regions span residues 1–35 (MSFR…PMTV) and 55–85 (SGKA…FPNY). The span at 58-77 (ARSNYNLTGTAKGTGPINSF) shows a compositional bias: polar residues.

As to expression, expressed predominantly within leaves and cotyledons vasculatures. Mainly observed in fully expanded leaves, at the base of mature inflorescences, in senescing leaves and cauline leaves, and, to a lower extent, in hypocotyls and rosette leaves prior to flowering.

Functionally, plays a role in carbon allocation, including during senescence and stresses, thus impacting starch accumulation. The polypeptide is Senescence-associated and QQS-related protein (Arabidopsis thaliana (Mouse-ear cress)).